A 295-amino-acid chain; its full sequence is Probable endonuclease 4 (295 aa).

Zn(2+)-binding residues include histidine 78, histidine 118, glutamate 154, aspartate 188, histidine 191, histidine 225, aspartate 238, histidine 240, and glutamate 270.

The protein belongs to the AP endonuclease 2 family. It depends on Zn(2+) as a cofactor.

It catalyses the reaction Endonucleolytic cleavage to 5'-phosphooligonucleotide end-products.. Its function is as follows. Endonuclease IV plays a role in DNA repair. It cleaves phosphodiester bonds at apurinic or apyrimidinic (AP) sites, generating a 3'-hydroxyl group and a 5'-terminal sugar phosphate. The polypeptide is Probable endonuclease 4 (Vibrio campbellii (strain ATCC BAA-1116)).